We begin with the raw amino-acid sequence, 180 residues long: Hypoxanthine-guanine phosphoribosyltransferase (180 aa).

Residues Lys-43 and Gly-44 each coordinate diphosphate. Glu-99 and Asp-100 together coordinate Mg(2+). Asp-103 functions as the Proton acceptor in the catalytic mechanism. GMP contacts are provided by residues Lys-131, 152–153 (FV), and Asp-159. Residue Arg-165 coordinates diphosphate.

This sequence belongs to the purine/pyrimidine phosphoribosyltransferase family. Mg(2+) is required as a cofactor.

It is found in the cytoplasm. It catalyses the reaction IMP + diphosphate = hypoxanthine + 5-phospho-alpha-D-ribose 1-diphosphate. It carries out the reaction GMP + diphosphate = guanine + 5-phospho-alpha-D-ribose 1-diphosphate. It participates in purine metabolism; IMP biosynthesis via salvage pathway; IMP from hypoxanthine: step 1/1. It functions in the pathway purine metabolism; GMP biosynthesis via salvage pathway; GMP from guanine: step 1/1. In terms of biological role, purine salvage pathway enzyme that catalyzes the transfer of the ribosyl-5-phosphate group from 5-phospho-alpha-D-ribose 1-diphosphate (PRPP) to the N9 position of the 6-oxopurines hypoxanthine and guanine to form the corresponding ribonucleotides IMP (inosine 5'-monophosphate) and GMP (guanosine 5'-monophosphate), with the release of PPi. The sequence is that of Hypoxanthine-guanine phosphoribosyltransferase (hpt) from Streptococcus pneumoniae serotype 4 (strain ATCC BAA-334 / TIGR4).